The chain runs to 261 residues: ATP synthase subunit a (261 aa).

A propeptide spans 1–14 (MSTLSFNNISTEVL) (removed in mature form). 7 consecutive transmembrane segments (helical) span residues 38–58 (ITNI…INLL), 96–116 (IYFP…LIGM), 126–146 (HFVV…ILGF), 153–173 (FFSL…LVLI), 191–211 (ANIL…YNIM), 214–234 (GIIF…FSGL), and 235–255 (ELGI…GYIK).

This sequence belongs to the ATPase A chain family. In terms of assembly, F-type ATPases have 2 components, CF(1) - the catalytic core - and CF(0) - the membrane proton channel. CF(1) has five subunits: alpha(3), beta(3), gamma(1), delta(1), epsilon(1). CF(0) has three main subunits: a, b and c.

The protein resides in the mitochondrion inner membrane. Its function is as follows. Mitochondrial membrane ATP synthase (F(1)F(0) ATP synthase or Complex V) produces ATP from ADP in the presence of a proton gradient across the membrane which is generated by electron transport complexes of the respiratory chain. F-type ATPases consist of two structural domains, F(1) - containing the extramembraneous catalytic core and F(0) - containing the membrane proton channel, linked together by a central stalk and a peripheral stalk. During catalysis, ATP synthesis in the catalytic domain of F(1) is coupled via a rotary mechanism of the central stalk subunits to proton translocation. Key component of the proton channel; it may play a direct role in the translocation of protons across the membrane. The polypeptide is ATP synthase subunit a (atp-6) (Neurospora crassa (strain ATCC 24698 / 74-OR23-1A / CBS 708.71 / DSM 1257 / FGSC 987)).